Consider the following 477-residue polypeptide: Histone-lysine N-methyltransferase SUV39H2 (477 aa).

The interval 1 to 59 (MATARAKARGSEAGARCHRAPGPPPRPKARRTARRRRAETLTARRSRPSAGERRAGSQR) is disordered. Residues 27 to 37 (PKARRTARRRR) are compositionally biased toward basic residues. A Chromo domain is found at 118–176 (YEVEYLCDYKVAKGVEYYLVKWKGWPDSTNTWEPLRNLRCPQLLRQFSDDKKTYLAQER). The region spanning 256 to 314 (FGCSCTDCFFDKCCPAEAGVVLAYNKKQQIKIQPGTPIYECNSRCRCGPECPNRIVQKG) is the Pre-SET domain. Zn(2+) is bound by residues cysteine 258, cysteine 260, cysteine 263, cysteine 268, cysteine 269, cysteine 296, cysteine 300, cysteine 302, and cysteine 306. One can recognise an SET domain in the interval 317–440 (YSLCIFKTSN…AGEELTFDYQ (124 aa)). S-adenosyl-L-methionine-binding positions include 328 to 330 (CGW), tyrosine 371, and 397 to 398 (NH). Cysteine 400 contacts Zn(2+). Serine 448, serine 451, and serine 455 each carry phosphoserine. Residues 461-477 (VRTQCKCGAETCRGYLN) form the Post-SET domain. Residues cysteine 465, cysteine 467, and cysteine 472 each contribute to the Zn(2+) site.

Belongs to the class V-like SAM-binding methyltransferase superfamily. Histone-lysine methyltransferase family. Suvar3-9 subfamily. Interacts with SMAD5. The large PER complex involved in the histone methylation is composed of at least PER2, CBX3, TRIM28, SUV39H1 and/or SUV39H2; CBX3 mediates the formation of the complex. Ubiquitinated by the DCX(DCAF13) E3 ubiquitin ligase complex, leading to its degradation. In terms of tissue distribution, testis specific; predominant expression in type B spermatogonia and preleptotene spermatocytes.

It is found in the nucleus. Its subcellular location is the chromosome. It localises to the centromere. It carries out the reaction L-lysyl(9)-[histone H3] + 3 S-adenosyl-L-methionine = N(6),N(6),N(6)-trimethyl-L-lysyl(9)-[histone H3] + 3 S-adenosyl-L-homocysteine + 3 H(+). In terms of biological role, histone methyltransferase that specifically trimethylates 'Lys-9' of histone H3 using monomethylated H3 'Lys-9' as substrate. H3 'Lys-9' trimethylation represents a specific tag for epigenetic transcriptional repression by recruiting HP1 (CBX1, CBX3 and/or CBX5) proteins to methylated histones. Mainly functions in heterochromatin regions, thereby playing a central role in the establishment of constitutive heterochromatin at pericentric and telomere regions. H3 'Lys-9' trimethylation is also required to direct DNA methylation at pericentric repeats. SUV39H1 is targeted to histone H3 via its interaction with RB1 and is involved in many processes, such as cell cycle regulation, transcriptional repression and regulation of telomere length. May participate in regulation of higher-order chromatin organization during spermatogenesis. Recruited by the large PER complex to the E-box elements of the circadian target genes such as PER2 itself or PER1, contributes to the conversion of local chromatin to a heterochromatin-like repressive state through H3 'Lys-9' trimethylation. This chain is Histone-lysine N-methyltransferase SUV39H2 (Suv39h2), found in Mus musculus (Mouse).